The following is a 302-amino-acid chain: Protoheme IX farnesyltransferase (302 aa).

The next 9 helical transmembrane spans lie at 24-44 (VVSLVTFTAVTGAVLAYFSGY), 48-68 (FFSVFTAIFCIAVGSGAAGAL), 97-117 (AALVFGLVLFALSVLLMELAV), 120-140 (LSAVLLSVAVFYYSVIYTVYL), 147-167 (NIVVGGGAGAFPPMIGWAAVA), 174-194 (SLVLFLIIFLWTPPHFWALAL), 221-241 (ILCYSVLLFITSILPYLLRFS), 245-265 (YMIVAFILGLVFLYYAINVYL), and 282-302 (FLLFGVFILDAALSTALGMLI).

It belongs to the UbiA prenyltransferase family. Protoheme IX farnesyltransferase subfamily.

Its subcellular location is the cell inner membrane. It carries out the reaction heme b + (2E,6E)-farnesyl diphosphate + H2O = Fe(II)-heme o + diphosphate. The protein operates within porphyrin-containing compound metabolism; heme O biosynthesis; heme O from protoheme: step 1/1. Converts heme B (protoheme IX) to heme O by substitution of the vinyl group on carbon 2 of heme B porphyrin ring with a hydroxyethyl farnesyl side group. In Neorickettsia sennetsu (strain ATCC VR-367 / Miyayama) (Ehrlichia sennetsu), this protein is Protoheme IX farnesyltransferase.